The following is a 165-amino-acid chain: GTP-dependent dephospho-CoA kinase (165 aa).

Positions 44, 45, 63, 65, 115, and 138 each coordinate GTP.

Belongs to the GTP-dependent DPCK family.

It carries out the reaction 3'-dephospho-CoA + GTP = GDP + CoA + H(+). It participates in cofactor biosynthesis; coenzyme A biosynthesis. Its function is as follows. Catalyzes the GTP-dependent phosphorylation of the 3'-hydroxyl group of dephosphocoenzyme A to form coenzyme A (CoA). The chain is GTP-dependent dephospho-CoA kinase from Picrophilus torridus (strain ATCC 700027 / DSM 9790 / JCM 10055 / NBRC 100828 / KAW 2/3).